We begin with the raw amino-acid sequence, 441 residues long: Arginine biosynthesis bifunctional protein ArgJ, mitochondrial (441 aa).

Positions 177, 203, 214, 303, 436, and 441 each coordinate substrate. Threonine 214 (nucleophile) is an active-site residue.

It belongs to the ArgJ family. Heterodimer of an alpha and a beta chain. The alpha and beta chains are autoproteolytically processed from a single precursor protein within the mitochondrion.

Its subcellular location is the mitochondrion matrix. It carries out the reaction N(2)-acetyl-L-ornithine + L-glutamate = N-acetyl-L-glutamate + L-ornithine. The catalysed reaction is L-glutamate + acetyl-CoA = N-acetyl-L-glutamate + CoA + H(+). It participates in amino-acid biosynthesis; L-arginine biosynthesis; L-ornithine and N-acetyl-L-glutamate from L-glutamate and N(2)-acetyl-L-ornithine (cyclic): step 1/1. Its pathway is amino-acid biosynthesis; L-arginine biosynthesis; N(2)-acetyl-L-ornithine from L-glutamate: step 1/4. Catalyzes two activities which are involved in the cyclic version of arginine biosynthesis: the synthesis of acetylglutamate from glutamate and acetyl-CoA, and of ornithine by transacetylation between acetylornithine and glutamate. This chain is Arginine biosynthesis bifunctional protein ArgJ, mitochondrial, found in Debaryomyces hansenii (strain ATCC 36239 / CBS 767 / BCRC 21394 / JCM 1990 / NBRC 0083 / IGC 2968) (Yeast).